The chain runs to 293 residues: MAAPSGASPQSEYIQHHLVHLNNIGEKQSVIAQFNVINYDSLFWSILMGLLVVFCLWLAARRATAGVPGRFQGFIEMIVDMVDDQAKSIVTNAKSRLFVAPLALTVFLWIILMNALDLLPVDLLPSIWRMTGLGAEHGDPLYYHRILPTADLNVPMGMSLGVLLLMFYYGIKIKHPGGFVKELFTAPFHAHGLASLVLAPFNLLLNLIEYAAKSVSLGMRLFGNMFAGELIFMLIALLGGAWTGFNGASIGLGIGHVLAGSVWAIFHILIVLLQAFIFMMLTLVYIGQAHEGH.

Transmembrane regions (helical) follow at residues 40-60 (DSLF…WLAA), 97-117 (LFVA…NALD), 151-171 (DLNV…YYGI), 188-208 (FHAH…LNLI), 225-245 (MFAG…WTGF), and 264-284 (AIFH…LTLV).

The protein belongs to the ATPase A chain family. F-type ATPases have 2 components, CF(1) - the catalytic core - and CF(0) - the membrane proton channel. CF(1) has five subunits: alpha(3), beta(3), gamma(1), delta(1), epsilon(1). CF(0) has three main subunits: a(1), b(2) and c(9-12). The alpha and beta chains form an alternating ring which encloses part of the gamma chain. CF(1) is attached to CF(0) by a central stalk formed by the gamma and epsilon chains, while a peripheral stalk is formed by the delta and b chains.

Its subcellular location is the cell inner membrane. In terms of biological role, key component of the proton channel; it plays a direct role in the translocation of protons across the membrane. This is ATP synthase subunit a from Bordetella bronchiseptica (strain ATCC BAA-588 / NCTC 13252 / RB50) (Alcaligenes bronchisepticus).